We begin with the raw amino-acid sequence, 260 residues long: Transcription repressor OFP13 (260 aa).

The region spanning 150–211 (VAMESEDPYG…VSAFVDLLSG (62 aa)) is the OVATE domain.

In terms of tissue distribution, expressed in roots, rosette and cauline leaves, shoots, stems, flower buds and siliques.

It localises to the nucleus. Functionally, transcriptional repressor that regulates multiple aspects of plant growth and development through the regulation of BEL1-LIKE (BLH) and KNOX TALE (KNAT) homeodomain transcription factors. The polypeptide is Transcription repressor OFP13 (OFP13) (Arabidopsis thaliana (Mouse-ear cress)).